Reading from the N-terminus, the 197-residue chain is ATP-dependent Clp protease proteolytic subunit 2 (197 aa).

The Nucleophile role is filled by Ser96. His121 is an active-site residue.

It belongs to the peptidase S14 family. Fourteen ClpP subunits assemble into 2 heptameric rings which stack back to back to give a disk-like structure with a central cavity, resembling the structure of eukaryotic proteasomes.

Its subcellular location is the cytoplasm. The catalysed reaction is Hydrolysis of proteins to small peptides in the presence of ATP and magnesium. alpha-casein is the usual test substrate. In the absence of ATP, only oligopeptides shorter than five residues are hydrolyzed (such as succinyl-Leu-Tyr-|-NHMec, and Leu-Tyr-Leu-|-Tyr-Trp, in which cleavage of the -Tyr-|-Leu- and -Tyr-|-Trp bonds also occurs).. Cleaves peptides in various proteins in a process that requires ATP hydrolysis. Has a chymotrypsin-like activity. Plays a major role in the degradation of misfolded proteins. The chain is ATP-dependent Clp protease proteolytic subunit 2 from Synechococcus sp. (strain CC9605).